A 684-amino-acid polypeptide reads, in one-letter code: MSLSKIIPSNKKEEQKSINAIFNSIDKSEGIIFNSGAGAGKTYALIESLKYIIRNYEKSLKQHNQQIICITYTNVATKEVKERLGNTDLVLVSTIHERMWGLIKDYQKELVEIHKEKLEDEISSLKQKLEKGQGYEKFQELEEDLKGNFKKIMIENRELFFQNYSAKAAEVKKSFKILLNDYPNMLKNVGNFKRIVNAIYKLDQYSKCYENISLNKQGYKSVEYNSIYNNDQLYKMRISHDTLLDYGLKIIKKYDLLKQIIIDKYPFIFIDEYQDTDEKVILIMSYLEQYAKKIDHKIFIGYFGDTAQNIYDDGVGSEITKIHSGLKQIDKVFNRRSTKEVIEVINKIRNDSIEQISIYDDCEGGSVKFYKGTSGNVKDLIERYIYEWKITTENQLHCLVLTNKIVAEYSGFKNIYEAFKETDKYKGSNYNQLNTELLSNDLSKLGEIPKLLFNIVRLQNNLVDKTTSVIDITPKESLFDEMSIEGLRNLIKLLKQYQGKTLGEYIESISTVYSQVNDENYKKIIDWTFGFENITFELFKNHLIEKLFNNILDDDVDRATATIQKILEVDIVEYGLWYKFIMDKQEEKVIYHTYHGTKGREFDNVIIIMENAFGRNHNYFNFFFENFLHPDVLEGEKKLNFEKIKNLLYVSCSRAIKNLRVLYIDDVTDFESEIKEMFGEVYPF.

The UvrD-like helicase ATP-binding domain occupies 14–351 (EQKSINAIFN…IEVINKIRND (338 aa)). Residue 35-42 (SGAGAGKT) coordinates ATP.

This sequence belongs to the helicase family. As to quaternary structure, homodimer. Interacts with GajA; 2 GajB dimers dock at opposite sides of the GajA complex to form a 4:4 GajA-GajB assembly (GajAB). GajAB interacts with Bacillus phage Phi3T Gad1 protein; this interaction forms a 4:4:8 GajAB-Gad1 complex and leads to GajAB inhibition.

Component of antiviral defense system Gabija type II, composed of GajA and GajB. Expression of Gabija type II in B.subtilis (strain BEST7003) confers resistance to phages phi105, and SpBeta. May be a helicase or contribute to GajA activation. The sequence is that of Gabija protein GajB from Bacillus cereus (strain HuB5-5).